The sequence spans 381 residues: Succinyl-diaminopimelate desuccinylase (381 aa).

A Zn(2+)-binding site is contributed by H72. D74 is a catalytic residue. Zn(2+) is bound at residue D103. The active-site Proton acceptor is E133. Positions 134, 163, and 348 each coordinate Zn(2+).

Belongs to the peptidase M20A family. DapE subfamily. In terms of assembly, homodimer. Zn(2+) serves as cofactor. Requires Co(2+) as cofactor.

The catalysed reaction is N-succinyl-(2S,6S)-2,6-diaminopimelate + H2O = (2S,6S)-2,6-diaminopimelate + succinate. Its pathway is amino-acid biosynthesis; L-lysine biosynthesis via DAP pathway; LL-2,6-diaminopimelate from (S)-tetrahydrodipicolinate (succinylase route): step 3/3. Its function is as follows. Catalyzes the hydrolysis of N-succinyl-L,L-diaminopimelic acid (SDAP), forming succinate and LL-2,6-diaminopimelate (DAP), an intermediate involved in the bacterial biosynthesis of lysine and meso-diaminopimelic acid, an essential component of bacterial cell walls. The protein is Succinyl-diaminopimelate desuccinylase of Anaplasma marginale (strain Florida).